Here is a 295-residue protein sequence, read N- to C-terminus: Vesicle-associated protein 4-2 (295 aa).

Basic and acidic residues predominate over residues 1-10 (MTMTEEKPTS). The interval 1–99 (MTMTEEKPTS…PSPSVSSVAK (99 aa)) is disordered. Residues 31–53 (NAASSAATSPFPSGASSSSTSSH) show a composition bias toward low complexity. Over residues 54 to 71 (LHNHHQHHHQHHHQHHHQ) the composition is skewed to basic residues. Polar residues predominate over residues 83–98 (GQNQHPTPSPSVSSVA). The MSP domain occupies 107 to 229 (RLKLDPSEKL…KEQILRVIFL (123 aa)). The segment covering 249–263 (DAAVEARKKPPEETG) has biased composition (basic and acidic residues). The segment at 249–270 (DAAVEARKKPPEETGPKMIGEG) is disordered. Serine 294 bears the Phosphoserine mark.

This sequence belongs to the VAMP-associated protein (VAP) (TC 9.B.17) family.

In terms of biological role, may play a role in vesicle trafficking. The chain is Vesicle-associated protein 4-2 (PVA42) from Arabidopsis thaliana (Mouse-ear cress).